A 443-amino-acid chain; its full sequence is Phosphoglucosamine mutase (443 aa).

Serine 103 functions as the Phosphoserine intermediate in the catalytic mechanism. Residues serine 103, aspartate 244, aspartate 246, and aspartate 248 each coordinate Mg(2+). The residue at position 103 (serine 103) is a Phosphoserine.

The protein belongs to the phosphohexose mutase family. Mg(2+) is required as a cofactor. Activated by phosphorylation.

It catalyses the reaction alpha-D-glucosamine 1-phosphate = D-glucosamine 6-phosphate. Its function is as follows. Catalyzes the conversion of glucosamine-6-phosphate to glucosamine-1-phosphate. This is Phosphoglucosamine mutase from Pelagibacter ubique (strain HTCC1062).